A 394-amino-acid chain; its full sequence is Elongation factor Tu 1 (394 aa).

The tr-type G domain occupies 10–204; the sequence is KPHVNVGTIG…ALDSYIPEPE (195 aa). Residues 19 to 26 are G1; it reads GHVDHGKT. 19–26 is a GTP binding site; sequence GHVDHGKT. Residue T26 coordinates Mg(2+). Positions 60–64 are G2; that stretch reads GITIN. A G3 region spans residues 81-84; the sequence is DCPG. GTP contacts are provided by residues 81 to 85 and 136 to 139; these read DCPGH and NKCD. A G4 region spans residues 136–139; that stretch reads NKCD. A G5 region spans residues 174–176; sequence SAL.

Belongs to the TRAFAC class translation factor GTPase superfamily. Classic translation factor GTPase family. EF-Tu/EF-1A subfamily. As to quaternary structure, monomer.

Its subcellular location is the cytoplasm. The enzyme catalyses GTP + H2O = GDP + phosphate + H(+). Its function is as follows. GTP hydrolase that promotes the GTP-dependent binding of aminoacyl-tRNA to the A-site of ribosomes during protein biosynthesis. The protein is Elongation factor Tu 1 of Shewanella sp. (strain MR-4).